A 267-amino-acid chain; its full sequence is Probable ribosomal RNA small subunit methyltransferase A (267 aa).

S-adenosyl-L-methionine-binding residues include Leu-12, Gly-37, Glu-58, Asp-83, and Asn-100.

It belongs to the class I-like SAM-binding methyltransferase superfamily. rRNA adenine N(6)-methyltransferase family. RsmA subfamily.

The protein localises to the cytoplasm. In terms of biological role, specifically dimethylates two adjacent adenosines in the loop of a conserved hairpin near the 3'-end of 16S rRNA in the 30S particle. May play a critical role in biogenesis of 30S subunits. The protein is Probable ribosomal RNA small subunit methyltransferase A of Methanococcus maripaludis (strain DSM 14266 / JCM 13030 / NBRC 101832 / S2 / LL).